The sequence spans 228 residues: Ribonuclease 3 1 (228 aa).

The RNase III domain occupies 1 to 124 (MYKLLMFRDD…VIGAYYLDNN (124 aa)). Glu37 serves as a coordination point for Mg(2+). The active site involves Asp41. Residues Ser110 and Glu113 each coordinate Mg(2+). Residue Glu113 is part of the active site. The DRBM domain occupies 153–223 (DSKNRFQEWV…AENALANLNK (71 aa)).

It belongs to the ribonuclease III family. Homodimer. The cofactor is Mg(2+).

The protein resides in the cytoplasm. It carries out the reaction Endonucleolytic cleavage to 5'-phosphomonoester.. In terms of biological role, digests double-stranded RNA. Involved in the processing of primary rRNA transcript to yield the immediate precursors to the large and small rRNAs (23S and 16S). Processes some mRNAs, and tRNAs when they are encoded in the rRNA operon. Processes pre-crRNA and tracrRNA of type II CRISPR loci if present in the organism. The sequence is that of Ribonuclease 3 1 from Nostoc sp. (strain PCC 7120 / SAG 25.82 / UTEX 2576).